Reading from the N-terminus, the 632-residue chain is Chaperone protein HtpG (632 aa).

Residues 1–339 (MAHETMSFQA…SADLPLNVSR (339 aa)) are a; substrate-binding. The segment at 340–559 (EILQESRDVK…DNDMSGYLQR (220 aa)) is b. The tract at residues 560 to 632 (MLKAAGQNAP…TNALLLSRAA (73 aa)) is c.

The protein belongs to the heat shock protein 90 family. As to quaternary structure, homodimer.

Its subcellular location is the cytoplasm. In terms of biological role, molecular chaperone. Has ATPase activity. This chain is Chaperone protein HtpG, found in Burkholderia cenocepacia (strain HI2424).